Here is a 23-residue protein sequence, read N- to C-terminus: Protein DCL, chloroplastic (23 aa).

The protein localises to the plastid. Its subcellular location is the chloroplast. Its function is as follows. Has a function in the early stage of chloroplast development and palisade cell morphogenesis. This Pseudotsuga menziesii (Douglas-fir) protein is Protein DCL, chloroplastic.